We begin with the raw amino-acid sequence, 101 residues long: MAQTLDDLIRTSELPVFIDFWADWCGPCKMVAPSVKQLASEFKGRLIVVKVNVDQQPDAAARFQVQGIPALMLFVGGQLKWRTAGAIPYQQMRQEVLKAIG.

The region spanning 2-101 (AQTLDDLIRT…MRQEVLKAIG (100 aa)) is the Thioredoxin domain. The cysteines at positions 25 and 28 are disulfide-linked.

It belongs to the thioredoxin family.

Participates in various redox reactions through the reversible oxidation of its active center dithiol to a disulfide and catalyzes dithiol-disulfide exchange reactions. This Chlorobaculum tepidum (strain ATCC 49652 / DSM 12025 / NBRC 103806 / TLS) (Chlorobium tepidum) protein is Thioredoxin 1 (trx1).